The primary structure comprises 336 residues: Ornithine carbamoyltransferase, catabolic (336 aa).

Carbamoyl phosphate-binding positions include 57-60 (STRT), Gln-84, Arg-108, and 135-138 (HPTQ). Residues Asn-169, Asp-233, and 237–238 (SM) contribute to the L-ornithine site. Carbamoyl phosphate is bound by residues 275–276 (CL) and Arg-322.

This sequence belongs to the aspartate/ornithine carbamoyltransferase superfamily. OTCase family.

Its subcellular location is the cytoplasm. It carries out the reaction carbamoyl phosphate + L-ornithine = L-citrulline + phosphate + H(+). It functions in the pathway amino-acid degradation; L-arginine degradation via ADI pathway; carbamoyl phosphate from L-arginine: step 2/2. Reversibly catalyzes the transfer of the carbamoyl group from carbamoyl phosphate (CP) to the N(epsilon) atom of ornithine (ORN) to produce L-citrulline. The chain is Ornithine carbamoyltransferase, catabolic from Photobacterium profundum (strain SS9).